The following is a 160-amino-acid chain: S-adenosylmethionine decarboxylase proenzyme (160 aa).

The active-site Schiff-base intermediate with substrate; via pyruvic acid is the serine 73. Serine 73 carries the post-translational modification Pyruvic acid (Ser); by autocatalysis. Histidine 78 (proton acceptor; for processing activity) is an active-site residue. The Proton donor; for catalytic activity role is filled by cysteine 93.

Belongs to the prokaryotic AdoMetDC family. Type 1 subfamily. As to quaternary structure, heterotetramer of two alpha and two beta chains arranged as a dimer of alpha/beta heterodimers. Pyruvate is required as a cofactor. In terms of processing, is synthesized initially as an inactive proenzyme. Formation of the active enzyme involves a self-maturation process in which the active site pyruvoyl group is generated from an internal serine residue via an autocatalytic post-translational modification. Two non-identical subunits are generated from the proenzyme in this reaction, and the pyruvate is formed at the N-terminus of the alpha chain, which is derived from the carboxyl end of the proenzyme. The post-translation cleavage follows an unusual pathway, termed non-hydrolytic serinolysis, in which the side chain hydroxyl group of the serine supplies its oxygen atom to form the C-terminus of the beta chain, while the remainder of the serine residue undergoes an oxidative deamination to produce ammonia and the pyruvoyl group blocking the N-terminus of the alpha chain.

It catalyses the reaction S-adenosyl-L-methionine + H(+) = S-adenosyl 3-(methylsulfanyl)propylamine + CO2. The protein operates within amine and polyamine biosynthesis; S-adenosylmethioninamine biosynthesis; S-adenosylmethioninamine from S-adenosyl-L-methionine: step 1/1. Its function is as follows. Catalyzes the decarboxylation of S-adenosylmethionine to S-adenosylmethioninamine (dcAdoMet), the propylamine donor required for the synthesis of the polyamines spermine and spermidine from the diamine putrescine. This chain is S-adenosylmethionine decarboxylase proenzyme, found in Pseudomonas paraeruginosa (strain DSM 24068 / PA7) (Pseudomonas aeruginosa (strain PA7)).